We begin with the raw amino-acid sequence, 2019 residues long: MANFLLPRGTSSFRRFTRESLAAIEKRMAEKQARGSATSQESREGLPEEEAPRPQLDLQASKKLPDLYGNPPRELIGEPLEDLDPFYSTQKTFIVLNKGKTIFRFSATNALYVLSPFHPVRRAAVKILVHSLFSMLIMCTILTNCVFMAQHDPPPWTKYVEYTFTAIYTFESLVKILARGFCLHAFTFLRDPWNWLDFSVIVMAYTTEFVDLGNVSALRTFRVLRALKTISVISGLKTIVGALIQSVKKLADVMVLTVFCLSVFALIGLQLFMGNLRHKCVRNFTELNGTNGSVEADGIVWNSLDVYLNDPANYLLKNGTTDVLLCGNSSDAGTCPEGYRCLKAGENPDHGYTSFDSFAWAFLALFRLMTQDCWERLYQQTLRSAGKIYMIFFMLVIFLGSFYLVNLILAVVAMAYEEQNQATIAETEEKEKRFQEAMEMLKKEHEALTIRGVDTVSRSSLEMSPLAPVTNHERRSKRRKRLSSGTEDGGDDRLPKSDSEDGPRALNQLSLTHGLSRTSMRPRSSRGSIFTFRRRDQGSEADFADDENSTAGESESHRTSLLVPWPLRRPSTQGQPGFGTSAPGHVLNGKRNSTVDCNGVVSLLGAGDAEATSPGSHLLRPIVLDRPPDTTTPSEEPGGPQMLTPQAPCADGFEEPGARQRALSAVSVLTSALEELEESHRKCPPCWNRFAQHYLIWECCPLWMSIKQKVKFVVMDPFADLTITMCIVLNTLFMALEHYNMTAEFEEMLQVGNLVFTGIFTAEMTFKIIALDPYYYFQQGWNIFDSIIVILSLMELGLSRMGNLSVLRSFRLLRVFKLAKSWPTLNTLIKIIGNSVGALGNLTLVLAIIVFIFAVVGMQLFGKNYSELRHRISDSGLLPRWHMMDFFHAFLIIFRILCGEWIETMWDCMEVSGQSLCLLVFLLVMVIGNLVVLNLFLALLLSSFSADNLTAPDEDGEMNNLQLALARIQRGLRFVKRTTWDFCCGLLRRRPKKPAALATHSQLPSCIAAPRSPPPPEVEKAPPARKETRFEEDKRPGQGTPGDTEPVCVPIAVAESDTDDQEEDEENSLGTEEEESSKQESQVVSGGHEPPQEPRAWSQVSETTSSEAEASTSQADWQQEREAEPRAPGCGETPEDSYSEGSTADMTNTADLLEQIPDLGEDVKDPEDCFTEGCVRRCPCCMVDTTQAPGKVWWRLRKTCYRIVEHSWFETFIIFMILLSSGALAFEDIYLEERKTIKVLLEYADKMFTYVFVLEMLLKWVAYGFKKYFTNAWCWLDFLIVDVSLVSLVANTLGFAEMGPIKSLRTLRALRPLRALSRFEGMRVVVNALVGAIPSIMNVLLVCLIFWLIFSIMGVNLFAGKFGRCINQTEGDLPLNYTIVNNKSECESFNVTGELYWTKVKVNFDNVGAGYLALLQVATFKGWMDIMYAAVDSRGYEEQPQWEDNLYMYIYFVVFIIFGSFFTLNLFIGVIIDNFNQQKKKLGGQDIFMTEEQKKYYNAMKKLGSKKPQKPIPRPLNKYQGFIFDIVTKQAFDVTIMFLICLNMVTMMVETDDQSPEKVNILAKINLLFVAIFTGECIVKMAALRHYYFTNSWNIFDFVVVILSIVGTVLSDIIQKYFFSPTLFRVIRLARIGRILRLIRGAKGIRTLLFALMMSLPALFNIGLLLFLVMFIYSIFGMANFAYVKWEAGIDDMFNFQTFANSMLCLFQITTSAGWDGLLSPILNTGPPYCDPNLPNSNGSRGNCGSPAVGILFFTTYIIISFLIVVNMYIAIILENFSVATEESTEPLSEDDFDMFYEIWEKFDPEATQFIEYLALSDFADALSEPLRIAKPNQISLINMDLPMVSGDRIHCMDILFAFTKRVLGESGEMDALKIQMEEKFMAANPSKISYEPITTTLRRKHEEVSATVIQRAFRRHLLQRSVKHASFLFRQQAGSSGLSDEDAPEREGLIAYMMNENFSRRSGPLSSSSISSTSFPPSYDSVTRATSDNLPVRASDYSRSEDLADFPPSPDRDRESIV.

Topologically, residues M1 to V129 are cytoplasmic. Positions R27–D66 are disordered. S36 carries the phosphoserine modification. T38 carries the post-translational modification Phosphothreonine. The segment covering E41 to P52 has biased composition (basic and acidic residues). An I repeat occupies V113–N420. Residues H130–A149 traverse the membrane as a helical segment. At Q150–T157 the chain is on the extracellular side. The chain crosses the membrane as a helical span at residues K158 to R179. Residues G180–F188 lie on the Cytoplasmic side of the membrane. A helical membrane pass occupies residues L189 to F209. Over V210 to S216 the chain is Extracellular. Residue N214 is glycosylated (N-linked (GlcNAc...) asparagine). Residues A217–L236 traverse the membrane as a helical segment. The Cytoplasmic segment spans residues K237–K249. A helical membrane pass occupies residues L250–F272. Topologically, residues M273 to S357 are extracellular. The cysteines at positions 280 and 335 are disulfide-linked. N283, N288, N291, N318, and N328 each carry an N-linked (GlcNAc...) asparagine glycan. Positions F358 to Y378 form an intramembrane region, pore-forming. Over Q379–G386 the chain is Extracellular. A helical transmembrane segment spans residues K387 to A413. Residues M414 to A719 lie on the Cytoplasmic side of the membrane. Phosphoserine is present on residues S457, S460, S483, and S484. Disordered stretches follow at residues L461–Q575 and E610–A647. At T486 the chain carries Phosphothreonine. Residues D491–P503 show a composition bias toward basic and acidic residues. 2 positions are modified to phosphoserine: S497 and S510. Positions N507–S528 are enriched in polar residues. The residue at position 526 (R526) is a Dimethylated arginine; alternate. R526 bears the Omega-N-methylarginine; alternate mark. Phosphoserine occurs at positions 539 and 571. Phosphoserine is present on residues S664 and S667. Residues C699 to G971 form an II repeat. A helical transmembrane segment spans residues D720–E737. Residues H738 to E746 lie on the Extracellular side of the membrane. An N-linked (GlcNAc...) asparagine glycan is attached at N740. Residues E747–I769 form a helical membrane-spanning segment. Over A770–Y775 the chain is Cytoplasmic. The helical transmembrane segment at Y776–L796 threads the bilayer. Residues G797–V806 lie on the Extracellular side of the membrane. N803 is a glycosylation site (N-linked (GlcNAc...) asparagine). A helical transmembrane segment spans residues L807–S821. Over W822–A838 the chain is Cytoplasmic. The chain crosses the membrane as a helical span at residues L839–L860. Topologically, residues F861–F886 are extracellular. Residue N864 is glycosylated (N-linked (GlcNAc...) asparagine). The segment at residues F887 to M905 is an intramembrane region (pore-forming). Topologically, residues W906–Q914 are extracellular. An intrachain disulfide couples C908 to C917. A helical membrane pass occupies residues S915 to S943. Over F944–E1205 the chain is Cytoplasmic. Positions H1000–A1144 are disordered. The segment covering E1017–P1036 has biased composition (basic and acidic residues). Acidic residues predominate over residues S1056 to E1075. The segment covering S1098–A1115 has biased composition (low complexity). An III repeat occupies P1189–L1503. A helical transmembrane segment spans residues H1206–E1227. At D1228–K1238 the chain is on the extracellular side. Residues V1239–V1261 traverse the membrane as a helical segment. The Cytoplasmic segment spans residues A1262–T1270. A helical transmembrane segment spans residues N1271–L1293. At G1294–G1299 the chain is on the extracellular side. A helical transmembrane segment spans residues P1300–F1319. Over E1320 to A1332 the chain is Cytoplasmic. Residues I1333 to L1357 traverse the membrane as a helical segment. Residues F1358 to V1402 lie on the Extracellular side of the membrane. 4 N-linked (GlcNAc...) asparagine glycosylation sites follow: N1367, N1376, N1382, and N1390. Positions N1403–M1424 form an intramembrane region, pore-forming. Topologically, residues D1425–Y1447 are extracellular. A helical transmembrane segment spans residues M1448–I1472. Topologically, residues D1473–Q1530 are cytoplasmic. Residue S1505 is modified to Phosphoserine; by PKC. The IV repeat unit spans residues I1512–Q1809. The helical transmembrane segment at A1531–V1549 threads the bilayer. The Extracellular segment spans residues E1550–N1560. A helical transmembrane segment spans residues I1561 to A1582. Residues A1583 to N1591 are Cytoplasmic-facing. A helical transmembrane segment spans residues S1592 to I1614. Over Q1615–P1621 the chain is Extracellular. Residues T1622–A1642 traverse the membrane as a helical segment. Topologically, residues K1643 to L1652 are cytoplasmic. The chain crosses the membrane as a helical span at residues M1653–F1681. Topologically, residues A1682 to F1699 are extracellular. The pore-forming intramembrane region spans A1700–D1716. Residues G1717 to P1747 are Extracellular-facing. Residues A1748–I1773 traverse the membrane as a helical segment. Residues L1774–V2019 are Cytoplasmic-facing. The tract at residues D1841–E1903 is interaction with FGF13. An IQ domain is found at E1903 to Q1932. Residues S1963–S1982 show a composition bias toward low complexity. Positions S1963–V2019 are disordered. The tract at residues P1977 to Y1980 is interaction with NEDD4, NEDD4L and WWP2.

It belongs to the sodium channel (TC 1.A.1.10) family. Nav1.5/SCN5A subfamily. As to quaternary structure, cannot form the same regulatory interactions with beta subunits as other Navs do. Interacts with the PDZ domain of the syntrophin SNTA1, SNTB1 and SNTB2. Interacts with NEDD4, NEDD4L, WWP2 and GPD1L. Interacts with CALM. Interacts with FGF13; the interaction is direct and may regulate SNC5A density at membranes and function. Interacts with FGF12 and FGF14. Interacts with ANK3. Interacts with PKP2 (via N-terminus). Interacts with TMEM233. Interacts with XIRP2; the interaction is required for normal action potential configuration in the heart. In terms of processing, phosphorylation at Ser-1505 by PKC in a highly conserved cytoplasmic loop slows inactivation of the sodium channel and reduces peak sodium currents. Regulated through phosphorylation by CaMK2D. Post-translationally, ubiquitinated by NEDD4L; which promotes its endocytosis. Does not seem to be ubiquitinated by NEDD4 or WWP2. Lacks the cysteine which covalently binds the conotoxin GVIIJ. This cysteine (position 868) is speculated in other sodium channel subunits alpha to be implied in covalent binding with the sodium channel subunit beta-2 or beta-4. In terms of processing, N-glycosylated at Asn-318, probably hinders potential interaction with regulatory subunits. As to expression, expressed in the myocardium (at protein level).

It localises to the cell membrane. It is found in the cytoplasm. Its subcellular location is the perinuclear region. The protein resides in the sarcolemma. The protein localises to the T-tubule. It localises to the cell junction. The enzyme catalyses Na(+)(in) = Na(+)(out). Its activity is regulated as follows. Channel inactivation is regulated by intracellular calcium levels. It is a tetrodotoxin-resistant voltage-gated Na(+) channel (Nav). In terms of biological role, pore-forming subunit of Nav1.5, a voltage-gated sodium (Nav) channel that directly mediates the depolarizing phase of action potentials in excitable membranes. Navs, also called VGSCs (voltage-gated sodium channels) or VDSCs (voltage-dependent sodium channels), operate by switching between closed and open conformations depending on the voltage difference across the membrane. In the open conformation they allow Na(+) ions to selectively pass through the pore, along their electrochemical gradient. The influx of Na(+) ions provokes membrane depolarization, initiating the propagation of electrical signals throughout cells and tissues. Nav1.5 is the predominant sodium channel expressed in myocardial cells and it is responsible for the initial upstroke of the action potential in cardiac myocytes, thereby initiating the heartbeat. Required for normal electrical conduction including formation of the infranodal ventricular conduction system and normal action potential configuration, as a result of its interaction with XIRP2. This Mus musculus (Mouse) protein is Sodium channel protein type 5 subunit alpha.